Reading from the N-terminus, the 118-residue chain is UPF0295 protein BA_0538/GBAA_0538/BAS0506 (118 aa).

2 consecutive transmembrane segments (helical) span residues 12–32 (IRTF…LGVF) and 43–63 (FMMV…WIGM).

This sequence belongs to the UPF0295 family.

The protein resides in the cell membrane. The sequence is that of UPF0295 protein BA_0538/GBAA_0538/BAS0506 from Bacillus anthracis.